Here is a 173-residue protein sequence, read N- to C-terminus: Photosystem I assembly protein Ycf3 (173 aa).

3 TPR repeats span residues 36–69 (AFAYYRDGMAAQSEGEYAEALENYREALALEQDD), 73–106 (SYILYNMGLIYQSNGELDKALEYYHQALELNPRL), and 121–154 (GEQSLQAGDEETAEALFDEAAQYWIRAIRIAPNN).

The protein belongs to the Ycf3 family.

The protein resides in the cellular thylakoid membrane. Essential for the assembly of the photosystem I (PSI) complex. May act as a chaperone-like factor to guide the assembly of the PSI subunits. This is Photosystem I assembly protein Ycf3 from Synechococcus sp. (strain JA-3-3Ab) (Cyanobacteria bacterium Yellowstone A-Prime).